We begin with the raw amino-acid sequence, 349 residues long: uncharacterized protein (349 aa).

A signal peptide spans 1–26 (MQSHAGGSRAPLGLLLICLCLPGLFA). Disordered stretches follow at residues 30 to 113 (GAPE…QGMA) and 322 to 349 (YPAG…GITP). Polar residues predominate over residues 39–52 (HSGQPSFTSLLNPG). A compositionally biased stretch (pro residues) spans 90-101 (NGPPFWGPPPME).

In terms of assembly, binds to numerous extracellular matrix proteins.

Its subcellular location is the secreted. It is found in the extracellular space. The protein localises to the extracellular matrix. This is an uncharacterized protein from Mus musculus (Mouse).